A 426-amino-acid chain; its full sequence is Serine--tRNA ligase (426 aa).

233–235 (TAE) is a binding site for L-serine. Residue 264 to 266 (RSE) participates in ATP binding. Residue E287 participates in L-serine binding. ATP is bound at residue 351 to 354 (EISS). S387 lines the L-serine pocket.

This sequence belongs to the class-II aminoacyl-tRNA synthetase family. Type-1 seryl-tRNA synthetase subfamily. Homodimer. The tRNA molecule binds across the dimer.

Its subcellular location is the cytoplasm. The catalysed reaction is tRNA(Ser) + L-serine + ATP = L-seryl-tRNA(Ser) + AMP + diphosphate + H(+). It carries out the reaction tRNA(Sec) + L-serine + ATP = L-seryl-tRNA(Sec) + AMP + diphosphate + H(+). It participates in aminoacyl-tRNA biosynthesis; selenocysteinyl-tRNA(Sec) biosynthesis; L-seryl-tRNA(Sec) from L-serine and tRNA(Sec): step 1/1. Functionally, catalyzes the attachment of serine to tRNA(Ser). Is also able to aminoacylate tRNA(Sec) with serine, to form the misacylated tRNA L-seryl-tRNA(Sec), which will be further converted into selenocysteinyl-tRNA(Sec). This chain is Serine--tRNA ligase, found in Azotobacter vinelandii (strain DJ / ATCC BAA-1303).